Here is a 267-residue protein sequence, read N- to C-terminus: Cerberus (267 aa).

Residues 1–17 (MHLLLFQLLVLLPLGKT) form the signal peptide. Disordered regions lie at residues 19 to 52 (RHQD…EAEE) and 87 to 113 (WKKP…QSLI). N-linked (GlcNAc...) asparagine glycosylation is present at Asn-26. Basic and acidic residues predominate over residues 88 to 101 (KKPEREMHPSRDSD). 4 disulfide bridges follow: Cys-162–Cys-209, Cys-176–Cys-223, Cys-186–Cys-239, and Cys-190–Cys-241. In terms of domain architecture, CTCK spans 162 to 246 (CRTVPFSQTI…EECQCKVKTE (85 aa)). The N-linked (GlcNAc...) asparagine glycan is linked to Asn-222.

This sequence belongs to the DAN family. Forms monomers and predominantly dimers. N-glycosylated.

The protein resides in the secreted. In terms of biological role, cytokine that may play a role in anterior neural induction and somite formation during embryogenesis in part through a BMP-inhibitory mechanism. Can regulate Nodal signaling during gastrulation as well as the formation and patterning of the primitive streak. In Homo sapiens (Human), this protein is Cerberus (CER1).